The primary structure comprises 370 residues: Adaptive-response sensory kinase SasA (370 aa).

The region spanning 152-365 is the Histidine kinase domain; the sequence is MVAHELRTPL…CFYLTVPVWQ (214 aa). Histidine 155 is modified (phosphohistidine; by autocatalysis).

As to quaternary structure, homooligomerizes. Interacts with KaiC. Participates in the KaiBC complex, whose core is composed of a KaiC homohexamer and 6 KaiB.

The enzyme catalyses ATP + protein L-histidine = ADP + protein N-phospho-L-histidine.. Functionally, member of the two-component regulatory system SasA/RpaA involved in genome-wide circadian gene expression. One of several clock output pathways. Participates in the Kai clock protein complex, the main circadian regulator in cyanobacteria, via its interaction with KaiC. KaiC enhances the autophosphorylation activity of SasA, which then transfers its phosphate group to RpaA to activate it. In addition to its output function, recruits fold-shifted KaiB (KaiB(fs)) to KaiC to cooperatively form the KaiB(6):KaiC(6) complex (independent of SasA kinase activity). Required for robustness of the circadian rhythm of gene expression and is involved in clock output, also required for adaptation to light/dark cycles. The sequence is that of Adaptive-response sensory kinase SasA from Prochlorococcus marinus (strain MIT 9303).